The primary structure comprises 188 residues: MEHLNSLEHHFLIAMPNLTESWFDKTVIYIVEDNEHGTMGLVINLEHNLTVPELLDHFELTVEAPENYADQPVLMGGPVDLEHGFILHEPQGTWQKSLPLRDNLAMTVSEDFLKAMADGTAPEKIVVCLGFSGWEKGQLNDEIQANNWLTIPYNEALLFDVPNDQKWQVALNTLGISPESLSMDAGHD.

Belongs to the UPF0301 (AlgH) family.

In Hydrogenovibrio crunogenus (strain DSM 25203 / XCL-2) (Thiomicrospira crunogena), this protein is UPF0301 protein Tcr_1827.